We begin with the raw amino-acid sequence, 134 residues long: Terepressin/terephysin (134 aa).

A signal peptide spans 1–33 (MKCSVLQMSRLSWTACVLLLPLLLLTLQGGVQG). A disulfide bridge connects residues Cys-34 and Cys-39. A propeptide spanning residues 44-50 (KRAVDSV) is cleaved from the precursor. Cystine bridges form between Cys-56-Cys-100, Cys-59-Cys-73, Cys-67-Cys-90, Cys-74-Cys-80, Cys-107-Cys-121, Cys-115-Cys-133, and Cys-122-Cys-127.

The protein belongs to the vasopressin/oxytocin family. Contains 7 disulfide bonds. As to expression, expressed by the venom duct.

It is found in the secreted. The sequence is that of Terepressin/terephysin from Terebra anilis (Auger snail).